The sequence spans 202 residues: MKALTARQQEVFDLIRDHISQTGMPPTRAEIAQRLGFRSPNAAEEHLKALARKGVIEIVSGASRGIRLLQEEEEGLPLVGRVAAGEPLLAQQHIEGHYQVDPSLFKPNADFLLRVSGMSMKDIGIMDGDLLAVHKTQDVRNGQVVVARIDDEVTVKRLKKQGNKVELLPENSEFKPIVVDLRQQSFTIEGLAVGVIRNGDWL.

The H-T-H motif DNA-binding region spans 28–48; it reads RAEIAQRLGFRSPNAAEEHLK. Catalysis depends on for autocatalytic cleavage activity residues Ser119 and Lys156.

The protein belongs to the peptidase S24 family. As to quaternary structure, homodimer.

It carries out the reaction Hydrolysis of Ala-|-Gly bond in repressor LexA.. In terms of biological role, represses a number of genes involved in the response to DNA damage (SOS response), including recA and lexA. Binds to the 16 bp palindromic sequence 5'-CTGTATATATATACAG-3'. In the presence of single-stranded DNA, RecA interacts with LexA causing an autocatalytic cleavage which disrupts the DNA-binding part of LexA, leading to derepression of the SOS regulon and eventually DNA repair. The polypeptide is LexA repressor (Escherichia coli (strain K12 / MC4100 / BW2952)).